A 360-amino-acid polypeptide reads, in one-letter code: CLIP domain-containing serine protease B4 (360 aa).

A signal peptide spans 1–24; sequence MIGNRVINLLIVATLALAGQTVLA. A Clip domain is found at 30-83; sequence DCVNPVGEAGKCVLFRECQPLVDIYNKPVNTPDDTQFLTESRCGLYERKTLVCC. 4 disulfides stabilise this stretch: cysteine 31-cysteine 82, cysteine 41-cysteine 72, cysteine 47-cysteine 83, and cysteine 138-cysteine 154. Residues 108–360 enclose the Peptidase S1 domain; the sequence is VIGGQPTKID…YVDWIKDNIY (253 aa). Catalysis depends on charge relay system residues histidine 153 and aspartate 213. N-linked (GlcNAc...) asparagine glycosylation is present at asparagine 224. Disulfide bonds link cysteine 280–cysteine 297 and cysteine 307–cysteine 336. Residue serine 311 is the Charge relay system of the active site.

The protein belongs to the peptidase S1 family. CLIP subfamily. In terms of assembly, interacts with SRPN2 in the hemolymph of immune-challenged female mosquitoes; the interaction results in CLIPB4 inhibition. In females, expressed in fat body, cuticle, thorax and ovaries.

The protein localises to the secreted. Serine protease which plays a role in the innate immune response against protozoan and bacterial pathogens, such as Plasmodium bergei, Staphylococcus aureus, Micrococcus luteus and Escherichia coli, by activating the melanization cascade. Cleaves and activates CLIPB8. In the resistant strain L3-5, involved in the melanization of killed parasite P.berghei ookinetes which results in their clearance. In the susceptible strain G3, appears to be dispensable for ookinete elimination which occurs by lysis. The chain is CLIP domain-containing serine protease B4 from Anopheles gambiae (African malaria mosquito).